A 142-amino-acid chain; its full sequence is Hemoglobin subunit alpha (142 aa).

Residues 2-142 (VLSATDKSNV…VSTVLTSKYR (141 aa)) enclose the Globin domain. S4 carries the phosphoserine modification. Residues K8 and K12 each carry the N6-succinyllysine modification. K17 bears the N6-acetyllysine; alternate mark. Position 17 is an N6-succinyllysine; alternate (K17). Phosphotyrosine is present on Y25. The residue at position 36 (S36) is a Phosphoserine. K41 carries the N6-succinyllysine modification. S50 carries the phosphoserine modification. An O2-binding site is contributed by H59. H88 serves as a coordination point for heme b. A Phosphoserine modification is found at S103. A Phosphothreonine modification is found at T109. The residue at position 125 (S125) is a Phosphoserine. Residues T135 and T138 each carry the phosphothreonine modification. S139 carries the post-translational modification Phosphoserine.

The protein belongs to the globin family. In terms of assembly, heterotetramer of two alpha chains and two beta chains. As to expression, red blood cells.

Functionally, involved in oxygen transport from the lung to the various peripheral tissues. Its function is as follows. Hemopressin acts as an antagonist peptide of the cannabinoid receptor CNR1. Hemopressin-binding efficiently blocks cannabinoid receptor CNR1 and subsequent signaling. This Alces alces alces (European moose) protein is Hemoglobin subunit alpha (HBA).